We begin with the raw amino-acid sequence, 75 residues long: Transaldolase (75 aa).

This sequence belongs to the transaldolase family. Type 1 subfamily. As to quaternary structure, homodimer. In terms of processing, phosphorylated. Predominantly expressed in Y-organs.

It localises to the cytoplasm. The enzyme catalyses D-sedoheptulose 7-phosphate + D-glyceraldehyde 3-phosphate = D-erythrose 4-phosphate + beta-D-fructose 6-phosphate. It participates in carbohydrate degradation; pentose phosphate pathway; D-glyceraldehyde 3-phosphate and beta-D-fructose 6-phosphate from D-ribose 5-phosphate and D-xylulose 5-phosphate (non-oxidative stage): step 2/3. In terms of biological role, transaldolase is important for the balance of metabolites in the pentose-phosphate pathway. May play a role in the conversion of sterols into ecdysteroids via NADPH. This Carcinus maenas (Common shore crab) protein is Transaldolase.